The following is a 452-amino-acid chain: Bifunctional protein GlmU (452 aa).

The segment at 1–233 (MTDRPFAALI…AWEVAGVNSR (233 aa)) is pyrophosphorylase. UDP-N-acetyl-alpha-D-glucosamine is bound by residues 11-14 (LAAG), K25, Q76, 81-82 (GT), 104-106 (YGD), G144, E159, N174, and N231. Mg(2+) is bound at residue D106. Position 231 (N231) interacts with Mg(2+). A linker region spans residues 234-254 (AELAAVEAEWQRRRRLAAMAD). The interval 255-452 (GATLIAPETV…AMKIKKAARK (198 aa)) is N-acetyltransferase. UDP-N-acetyl-alpha-D-glucosamine is bound by residues R320 and K338. The active-site Proton acceptor is the H350. Positions 353 and 364 each coordinate UDP-N-acetyl-alpha-D-glucosamine. Residues A367, 373-374 (NY), S392, A410, and R427 contribute to the acetyl-CoA site.

The protein in the N-terminal section; belongs to the N-acetylglucosamine-1-phosphate uridyltransferase family. This sequence in the C-terminal section; belongs to the transferase hexapeptide repeat family. As to quaternary structure, homotrimer. Mg(2+) is required as a cofactor.

The protein resides in the cytoplasm. It catalyses the reaction alpha-D-glucosamine 1-phosphate + acetyl-CoA = N-acetyl-alpha-D-glucosamine 1-phosphate + CoA + H(+). It carries out the reaction N-acetyl-alpha-D-glucosamine 1-phosphate + UTP + H(+) = UDP-N-acetyl-alpha-D-glucosamine + diphosphate. It participates in nucleotide-sugar biosynthesis; UDP-N-acetyl-alpha-D-glucosamine biosynthesis; N-acetyl-alpha-D-glucosamine 1-phosphate from alpha-D-glucosamine 6-phosphate (route II): step 2/2. The protein operates within nucleotide-sugar biosynthesis; UDP-N-acetyl-alpha-D-glucosamine biosynthesis; UDP-N-acetyl-alpha-D-glucosamine from N-acetyl-alpha-D-glucosamine 1-phosphate: step 1/1. It functions in the pathway bacterial outer membrane biogenesis; LPS lipid A biosynthesis. In terms of biological role, catalyzes the last two sequential reactions in the de novo biosynthetic pathway for UDP-N-acetylglucosamine (UDP-GlcNAc). The C-terminal domain catalyzes the transfer of acetyl group from acetyl coenzyme A to glucosamine-1-phosphate (GlcN-1-P) to produce N-acetylglucosamine-1-phosphate (GlcNAc-1-P), which is converted into UDP-GlcNAc by the transfer of uridine 5-monophosphate (from uridine 5-triphosphate), a reaction catalyzed by the N-terminal domain. The chain is Bifunctional protein GlmU from Rhizorhabdus wittichii (strain DSM 6014 / CCUG 31198 / JCM 15750 / NBRC 105917 / EY 4224 / RW1) (Sphingomonas wittichii).